The following is a 435-amino-acid chain: Glutamyl-tRNA reductase (435 aa).

Substrate-binding positions include Thr49–Arg52, Ser114, Glu119–Gln121, and Gln125. The active-site Nucleophile is Cys50. Gly204–Ile209 is a binding site for NADP(+).

This sequence belongs to the glutamyl-tRNA reductase family. Homodimer.

It catalyses the reaction (S)-4-amino-5-oxopentanoate + tRNA(Glu) + NADP(+) = L-glutamyl-tRNA(Glu) + NADPH + H(+). The protein operates within porphyrin-containing compound metabolism; protoporphyrin-IX biosynthesis; 5-aminolevulinate from L-glutamyl-tRNA(Glu): step 1/2. In terms of biological role, catalyzes the NADPH-dependent reduction of glutamyl-tRNA(Glu) to glutamate 1-semialdehyde (GSA). The protein is Glutamyl-tRNA reductase of Actinobacillus succinogenes (strain ATCC 55618 / DSM 22257 / CCUG 43843 / 130Z).